The chain runs to 47 residues: Antimicrobial peptide LCI (47 aa).

It localises to the secreted. Functionally, has antibacterial activity against X.oryzae pv oryzae and R.solanacearum, but not E.coli or P.carotovorum subsp carotovorum. May bind DNA or mRNA. The polypeptide is Antimicrobial peptide LCI (Bacillus subtilis).